The following is a 561-amino-acid chain: uncharacterized protein (561 aa).

Disordered stretches follow at residues Ile-20–Pro-42 and Gln-82–Phe-283. Residues Asp-103–Pro-131 show a composition bias toward basic and acidic residues. 2 stretches are compositionally biased toward basic residues: residues Arg-135–Lys-156 and Lys-165–Arg-185. Basic and acidic residues-rich tracts occupy residues Ser-192–Arg-203, Tyr-211–Pro-247, and Pro-259–Ser-272.

The protein belongs to the mimivirus L41 family.

This is an uncharacterized protein from Acanthamoeba polyphaga (Amoeba).